Here is a 592-residue protein sequence, read N- to C-terminus: Arginine--tRNA ligase (592 aa).

Positions 139–149 (ANPNGPLHIGH) match the 'HIGH' region motif.

It belongs to the class-I aminoacyl-tRNA synthetase family.

It is found in the cytoplasm. The enzyme catalyses tRNA(Arg) + L-arginine + ATP = L-arginyl-tRNA(Arg) + AMP + diphosphate. This Methanopyrus kandleri (strain AV19 / DSM 6324 / JCM 9639 / NBRC 100938) protein is Arginine--tRNA ligase.